Reading from the N-terminus, the 181-residue chain is Cell division protein ZapC (181 aa).

It belongs to the ZapC family. Interacts directly with FtsZ.

Its subcellular location is the cytoplasm. Functionally, contributes to the efficiency of the cell division process by stabilizing the polymeric form of the cell division protein FtsZ. Acts by promoting interactions between FtsZ protofilaments and suppressing the GTPase activity of FtsZ. In Shewanella woodyi (strain ATCC 51908 / MS32), this protein is Cell division protein ZapC.